The following is a 489-amino-acid chain: Glycogen synthase (489 aa).

Lys-15 is a binding site for ADP-alpha-D-glucose.

It belongs to the glycosyltransferase 1 family. Bacterial/plant glycogen synthase subfamily.

The enzyme catalyses [(1-&gt;4)-alpha-D-glucosyl](n) + ADP-alpha-D-glucose = [(1-&gt;4)-alpha-D-glucosyl](n+1) + ADP + H(+). The protein operates within glycan biosynthesis; glycogen biosynthesis. Synthesizes alpha-1,4-glucan chains using ADP-glucose. This chain is Glycogen synthase, found in Francisella tularensis subsp. tularensis (strain SCHU S4 / Schu 4).